Reading from the N-terminus, the 696-residue chain is Solute carrier family 53 member 1 (696 aa).

The Cytoplasmic portion of the chain corresponds to 1–228 (MKFAEHLSAH…RVPPLGAAQP (228 aa)). Residues 2–224 (KFAEHLSAHI…MKRLRVPPLG (223 aa)) form the SPX domain. Positions 158–165 (KILKKHDK) are important for inositol polyphosphate binding. The chain crosses the membrane as a helical span at residues 229 to 259 (APAWTTFRVGLFCGIFIVLNITLVLAAVFKL). At 260–264 (ETDRS) the chain is on the extracellular side. The chain crosses the membrane as a helical span at residues 265-296 (IWPLIRIYRGGFLLIEFLFLLGINTYGWRQAG). Residues 297-309 (VNHVLIFELNPRS) lie on the Cytoplasmic side of the membrane. Residues 310 to 337 (NLSHQHLFEIAGFLGILWCLSLLACFFA) form a helical membrane-spanning segment. At 338-343 (PISVIP) the chain is on the extracellular side. A helical membrane pass occupies residues 344-365 (TYVYPLALYGFMVFFLINPTKT). An intramembrane region (helical) is located at residues 366–383 (FYYKSRFWLLKLLFRVFT). Residues 384–388 (APFHK) are Cytoplasmic-facing. The discontinuously helical transmembrane segment at 389–422 (VGFADFWLADQLNSLSVILMDLEYMICFYSLELK) threads the bilayer. The phosphate site is built by Asp398 and Asn401. Topologically, residues 423–429 (WDESKGL) are extracellular. The discontinuously helical transmembrane segment at 430-471 (LPNNSEESGICHKYTYGVRAIVQCIPAWLRFIQCLRRYRDTK) threads the bilayer. One can recognise an EXS domain in the interval 439–643 (ICHKYTYGVR…LNADDQTLLE (205 aa)). Residue Arg472 is a topological domain, cytoplasmic. A helical transmembrane segment spans residues 473–503 (AFPHLVNAGKYSTTFFMVTFAALYSTHKERG). Phosphate contacts are provided by Lys482 and Tyr483. Residues 504-506 (HSD) lie on the Extracellular side of the membrane. The helical transmembrane segment at 507–534 (TMVFFYLWIVFYIISSCYTLIWDLKMDW) threads the bilayer. Topologically, residues 535-553 (GLFDKNAGENTFLREEIVY) are cytoplasmic. The chain crosses the membrane as a discontinuously helical span at residues 554–585 (PQKAYYYCAIIEDVILRFAWTIQISITSTTLL). Arg570 is a phosphate binding site. Residues 586–587 (PH) lie on the Extracellular side of the membrane. The helical transmembrane segment at 588 to 626 (SGDIIATVFAPLEVFRRFVWNFFRLENEHLNNCGEFRAV) threads the bilayer. Phosphate is bound by residues Arg603 and Arg604. At 627–696 (RDISVAPLNA…IEDTDDEANT (70 aa)) the chain is on the cytoplasmic side. The residue at position 668 (Ser668) is a Phosphoserine. Positions 673–696 (RLASQSKARDTKVLIEDTDDEANT) are disordered. Thr690 is modified (phosphothreonine).

This sequence belongs to the SYG1 (TC 2.A.94) family. As to quaternary structure, homodimer. In terms of tissue distribution, widely expressed. Detected in spleen, lymph node, thymus, leukocytes, bone marrow, heart, kidney, pancreas and skeletal muscle.

It localises to the cell membrane. It carries out the reaction phosphate(in) = phosphate(out). Its activity is regulated as follows. Allosterically activated by inositol hexakisphosphate (Ins6P). Inorganic ion transporter that mediates phosphate ion export across plasma membrane. Plays a major role in phosphate homeostasis, preventing intracellular phosphate accumulation and possible calcium phosphate precipitation, ultimately preserving calcium signaling. Binds inositol hexakisphosphate (Ins6P) and similar inositol polyphosphates, such as 5-diphospho-inositol pentakisphosphate (5-InsP7), which are important intracellular signaling molecules involved in regulation of phosphate flux. In Homo sapiens (Human), this protein is Solute carrier family 53 member 1.